We begin with the raw amino-acid sequence, 263 residues long: Fructose-bisphosphate aldolase class 1 (263 aa).

Substrate contacts are provided by residues 24–25, His29, Asp33, and Trp144; that span reads DH. The active-site Proton donor is the Tyr146. Substrate-binding positions include Arg148, 177-179, 202-204, and 231-232; these read KIK, SGG, and GR. Residue Lys177 is the Schiff-base intermediate with dihydroxyacetone-P of the active site.

The protein belongs to the DeoC/FbaB aldolase family. In terms of assembly, homodecamer (dimer of pentamers).

It is found in the cytoplasm. The enzyme catalyses beta-D-fructose 1,6-bisphosphate = D-glyceraldehyde 3-phosphate + dihydroxyacetone phosphate. Activated by citrate. In terms of biological role, catalyzes the reversible cleavage of fructose 1,6-bisphosphate (FBP) to glyceraldehyde 3-phosphate (GAP) and dihydroxyacetone phosphate (DHAP). In Thermoproteus tenax (strain ATCC 35583 / DSM 2078 / JCM 9277 / NBRC 100435 / Kra 1), this protein is Fructose-bisphosphate aldolase class 1 (fba).